The primary structure comprises 771 residues: Assimilatory nitrate reductase electron transfer subunit (771 aa).

Residue 43–79 coordinates FAD; sequence YNRILLSSVLQGEASLDDITLNSKDWYDKHGITLYTG. Cys-414, Cys-416, Cys-449, and Cys-452 together coordinate [2Fe-2S] cluster.

FAD serves as cofactor. It depends on [2Fe-2S] cluster as a cofactor.

Required for nitrate assimilation. The polypeptide is Assimilatory nitrate reductase electron transfer subunit (nasB) (Bacillus subtilis (strain 168)).